The following is a 278-amino-acid chain: MALKKYNPTTPGQRQLVMVDRSALYKGKPVKTLTEGKHSNGGRNNTGRITVRFRGGGHKKTYRLVDFKRTKVDVPAKVERLEYDPNRTAFIALIKYEDGEQAYILAPQRLAVGDTVIAGAYVDVKPGNVMPLGNMPIGTIVHNVELKIGKGGQIARSAGTYAQLVGRDHDYVIMRLNSGEQRLVHGRCTATIGAVSNPDHMNISIGKAGRTRWLGWRPHNRGVVMNPIDHPHGGGEGRTSGGRHPVTPWGKPTKGKKTRSNKSTDKFILISRHKRKKK.

Residues N226–K278 are disordered.

It belongs to the universal ribosomal protein uL2 family. As to quaternary structure, part of the 50S ribosomal subunit. Forms a bridge to the 30S subunit in the 70S ribosome.

Functionally, one of the primary rRNA binding proteins. Required for association of the 30S and 50S subunits to form the 70S ribosome, for tRNA binding and peptide bond formation. It has been suggested to have peptidyltransferase activity; this is somewhat controversial. Makes several contacts with the 16S rRNA in the 70S ribosome. The polypeptide is Large ribosomal subunit protein uL2 (Rhodopseudomonas palustris (strain HaA2)).